The primary structure comprises 450 residues: Phosphoglucosamine mutase (450 aa).

The active-site Phosphoserine intermediate is Ser-101. Positions 101, 240, 242, and 244 each coordinate Mg(2+). The residue at position 101 (Ser-101) is a Phosphoserine.

The protein belongs to the phosphohexose mutase family. Mg(2+) serves as cofactor. Post-translationally, activated by phosphorylation.

It carries out the reaction alpha-D-glucosamine 1-phosphate = D-glucosamine 6-phosphate. Functionally, catalyzes the conversion of glucosamine-6-phosphate to glucosamine-1-phosphate. In Streptococcus equi subsp. equi (strain 4047), this protein is Phosphoglucosamine mutase.